We begin with the raw amino-acid sequence, 494 residues long: Probable cytochrome P450 518A1 (494 aa).

Residues methionine 1–tyrosine 21 form a helical membrane-spanning segment. Cysteine 438 serves as a coordination point for heme.

The protein belongs to the cytochrome P450 family. It depends on heme as a cofactor.

It is found in the membrane. The polypeptide is Probable cytochrome P450 518A1 (cyp518A1) (Dictyostelium discoideum (Social amoeba)).